The following is a 254-amino-acid chain: Dihydroorotate dehydrogenase B (NAD(+)), electron transfer subunit (254 aa).

The region spanning 1–99 (MLQTEMKVIQ…LGPLGKGFDL (99 aa)) is the FAD-binding FR-type domain. Residues 50 to 53 (RPIS), 67 to 69 (LYR), and 74 to 75 (GT) each bind FAD. Residues cysteine 218, cysteine 223, cysteine 226, and cysteine 241 each coordinate [2Fe-2S] cluster.

Belongs to the PyrK family. Heterotetramer of 2 PyrK and 2 PyrD type B subunits. [2Fe-2S] cluster serves as cofactor. FAD is required as a cofactor.

It participates in pyrimidine metabolism; UMP biosynthesis via de novo pathway; orotate from (S)-dihydroorotate (NAD(+) route): step 1/1. Responsible for channeling the electrons from the oxidation of dihydroorotate from the FMN redox center in the PyrD type B subunit to the ultimate electron acceptor NAD(+). This is Dihydroorotate dehydrogenase B (NAD(+)), electron transfer subunit from Listeria innocua serovar 6a (strain ATCC BAA-680 / CLIP 11262).